A 432-amino-acid polypeptide reads, in one-letter code: GTPase Obg (432 aa).

The region spanning 1 to 159 (MKFIDTAKFT…YEVKAELKVL (159 aa)) is the Obg domain. Residues 160-332 (ADVGFVGLPN…LLLKIAKELE (173 aa)) form the OBG-type G domain. GTP is bound by residues 166 to 173 (GLPNAGKS), 191 to 195 (FTTLN), 213 to 216 (DLPG), 284 to 287 (NKMD), and 313 to 315 (SGL). Mg(2+) is bound by residues S173 and T193. The region spanning 354–432 (RLEEDEEDIQ…VFEYELEWMD (79 aa)) is the OCT domain.

This sequence belongs to the TRAFAC class OBG-HflX-like GTPase superfamily. OBG GTPase family. In terms of assembly, monomer. Mg(2+) is required as a cofactor.

The protein localises to the cytoplasm. An essential GTPase which binds GTP, GDP and possibly (p)ppGpp with moderate affinity, with high nucleotide exchange rates and a fairly low GTP hydrolysis rate. Plays a role in control of the cell cycle, stress response, ribosome biogenesis and in those bacteria that undergo differentiation, in morphogenesis control. In Mesoplasma florum (strain ATCC 33453 / NBRC 100688 / NCTC 11704 / L1) (Acholeplasma florum), this protein is GTPase Obg.